The primary structure comprises 247 residues: MQTQVLFEHPLNEKMRTWLRIEFLIQQLTVNLPIVDHAGALHFFRNVSELLDVFERGEVRTELLKELNRQQRKLQTWIGVPGVDQSRIEALIQQLKAAVSVLISAPRIGQFLREDRLIALVRQRLSIPGGCCSFDLPTLHIWLHLPQAQRDSQVETWIASLNPLTQALTMVLDLIRQSAPFRKQTSLNGFYQDNGGDADLLRLNLSLDSQLYPQISGHKSRFAIRFMPLDTENGQVPERLDFELACC.

The protein belongs to the ZapD family. As to quaternary structure, interacts with FtsZ.

The protein resides in the cytoplasm. Cell division factor that enhances FtsZ-ring assembly. Directly interacts with FtsZ and promotes bundling of FtsZ protofilaments, with a reduction in FtsZ GTPase activity. The protein is Cell division protein ZapD of Shigella flexneri.